Consider the following 338-residue polypeptide: Ketol-acid reductoisomerase (NADP(+)) (338 aa).

The region spanning 1–181 is the KARI N-terminal Rossmann domain; sequence MKVFYDKDCD…GGGRTGIIET (181 aa). NADP(+) is bound by residues 24–27, arginine 47, serine 50, threonine 52, and 82–85; these read YGSQ and DEFQ. Residue histidine 107 is part of the active site. Residue glycine 133 participates in NADP(+) binding. A KARI C-terminal knotted domain is found at 182–327; sequence TFKDETETDL…EKLRSMMPWI (146 aa). Aspartate 190, glutamate 194, glutamate 226, and glutamate 230 together coordinate Mg(2+). Serine 251 contributes to the substrate binding site.

The protein belongs to the ketol-acid reductoisomerase family. Mg(2+) is required as a cofactor.

The catalysed reaction is (2R)-2,3-dihydroxy-3-methylbutanoate + NADP(+) = (2S)-2-acetolactate + NADPH + H(+). It carries out the reaction (2R,3R)-2,3-dihydroxy-3-methylpentanoate + NADP(+) = (S)-2-ethyl-2-hydroxy-3-oxobutanoate + NADPH + H(+). The protein operates within amino-acid biosynthesis; L-isoleucine biosynthesis; L-isoleucine from 2-oxobutanoate: step 2/4. Its pathway is amino-acid biosynthesis; L-valine biosynthesis; L-valine from pyruvate: step 2/4. Involved in the biosynthesis of branched-chain amino acids (BCAA). Catalyzes an alkyl-migration followed by a ketol-acid reduction of (S)-2-acetolactate (S2AL) to yield (R)-2,3-dihydroxy-isovalerate. In the isomerase reaction, S2AL is rearranged via a Mg-dependent methyl migration to produce 3-hydroxy-3-methyl-2-ketobutyrate (HMKB). In the reductase reaction, this 2-ketoacid undergoes a metal-dependent reduction by NADPH to yield (R)-2,3-dihydroxy-isovalerate. The polypeptide is Ketol-acid reductoisomerase (NADP(+)) (Pseudomonas syringae pv. tomato (strain ATCC BAA-871 / DC3000)).